Reading from the N-terminus, the 411-residue chain is Arginine deiminase (411 aa).

Cysteine 399 serves as the catalytic Amidino-cysteine intermediate.

This sequence belongs to the arginine deiminase family.

It is found in the cytoplasm. It catalyses the reaction L-arginine + H2O = L-citrulline + NH4(+). The protein operates within amino-acid degradation; L-arginine degradation via ADI pathway; carbamoyl phosphate from L-arginine: step 1/2. The polypeptide is Arginine deiminase (Latilactobacillus sakei subsp. sakei (strain 23K) (Lactobacillus sakei subsp. sakei)).